Here is a 520-residue protein sequence, read N- to C-terminus: Amine oxidase [flavin-containing] B (520 aa).

Topologically, residues M1–V489 are cytoplasmic. K52 carries the post-translational modification N6-acetyllysine. S-8alpha-FAD cysteine is present on C397. A helical; Anchor for type IV membrane protein transmembrane segment spans residues P490 to L516. The Mitochondrial intermembrane portion of the chain corresponds to L517–I520.

Belongs to the flavin monoamine oxidase family. As to quaternary structure, monomer, homo- or heterodimer (containing two subunits of similar size). Each subunit contains a covalently bound flavin. Enzymatically active as monomer. FAD serves as cofactor.

The protein resides in the mitochondrion outer membrane. It catalyses the reaction a secondary aliphatic amine + O2 + H2O = a primary amine + an aldehyde + H2O2. The catalysed reaction is (R)-adrenaline + O2 + H2O = (R)-3,4-dihydroxymandelaldehyde + methylamine + H2O2. It carries out the reaction a primary methyl amine + O2 + H2O = an aldehyde + H2O2 + NH4(+). The enzyme catalyses benzylamine + O2 + H2O = benzaldehyde + H2O2 + NH4(+). It catalyses the reaction dopamine + O2 + H2O = 3,4-dihydroxyphenylacetaldehyde + H2O2 + NH4(+). The catalysed reaction is tyramine + O2 + H2O = (4-hydroxyphenyl)acetaldehyde + H2O2 + NH4(+). It carries out the reaction (R)-noradrenaline + O2 + H2O = (R)-3,4-dihydroxymandelaldehyde + H2O2 + NH4(+). The enzyme catalyses 2-phenylethylamine + O2 + H2O = 2-phenylacetaldehyde + H2O2 + NH4(+). It catalyses the reaction N-acetylputrescine + O2 + H2O = 4-acetamidobutanal + H2O2 + NH4(+). In terms of biological role, catalyzes the oxidative deamination of primary and some secondary amines such as neurotransmitters, and exogenous amines including the tertiary amine, neurotoxin 1-methyl-4-phenyl-1,2,3,6-tetrahydropyridine (MPTP), with concomitant reduction of oxygen to hydrogen peroxide and participates in the metabolism of neuroactive and vasoactive amines in the central nervous system and peripheral tissues. Preferentially degrades benzylamine and phenylethylamine. The polypeptide is Amine oxidase [flavin-containing] B (Cavia porcellus (Guinea pig)).